We begin with the raw amino-acid sequence, 560 residues long: Flagellar M-ring protein (560 aa).

Residues 26–46 form a helical membrane-spanning segment; sequence IPLIVAGSAAVAIVVAMVLWA. The tract at residues 304–372 is disordered; that stretch reads VGAGYPGGVP…TSNYEVDRTI (69 aa). A compositionally biased stretch (low complexity) spans 331–353; sequence PPTNQQNAQNTPQTSTSTNSNSA. Residues 354–366 are compositionally biased toward polar residues; it reads GPRSTQRNETSNY. Residues 455-475 form a helical membrane-spanning segment; sequence FIDQLLAAGRWLLVLVVAWIL.

Belongs to the FliF family. In terms of assembly, the basal body constitutes a major portion of the flagellar organelle and consists of four rings (L,P,S, and M) mounted on a central rod. The M ring is integral to the inner membrane of the cell and may be connected to the flagellar rod via the S ring. The S (supramembrane ring) lies just distal to the M ring. The L and P rings lie in the outer membrane and the periplasmic space, respectively.

It is found in the cell inner membrane. The protein localises to the bacterial flagellum basal body. Functionally, the M ring may be actively involved in energy transduction. The sequence is that of Flagellar M-ring protein (fliF) from Salmonella typhimurium (strain LT2 / SGSC1412 / ATCC 700720).